Here is a 134-residue protein sequence, read N- to C-terminus: Outer membrane lipoprotein RcsF (134 aa).

Positions 1-15 (MRALPICLVALMLSG) are cleaved as a signal peptide. Cys-16 carries N-palmitoyl cysteine lipidation. A lipid anchor (S-diacylglycerol cysteine) is attached at Cys-16. Disordered stretches follow at residues 22–48 (SPVE…RATP) and 67–88 (GEVS…IPTA). Residues 72–82 (DSCQASNQDSP) are compositionally biased toward polar residues. Disulfide bonds link Cys-74-Cys-118 and Cys-109-Cys-124.

It belongs to the RcsF family.

It is found in the cell outer membrane. Its function is as follows. Essential component of the Rcs signaling system, which controls transcription of numerous genes. Plays a role in signal transduction from the cell surface to the histidine kinase RcsC. May detect outer membrane defects. The chain is Outer membrane lipoprotein RcsF from Escherichia coli O6:H1 (strain CFT073 / ATCC 700928 / UPEC).